The sequence spans 261 residues: Small ribosomal subunit protein uS2 (261 aa).

It belongs to the universal ribosomal protein uS2 family.

The polypeptide is Small ribosomal subunit protein uS2 (Thermodesulfovibrio yellowstonii (strain ATCC 51303 / DSM 11347 / YP87)).